The chain runs to 383 residues: Acetylornithine deacetylase (383 aa).

Histidine 80 contributes to the Zn(2+) binding site. Residue aspartate 82 is part of the active site. Aspartate 112 is a binding site for Zn(2+). Glutamate 144 is a catalytic residue. The Zn(2+) site is built by glutamate 145, glutamate 169, and histidine 355.

The protein belongs to the peptidase M20A family. ArgE subfamily. As to quaternary structure, homodimer. Zn(2+) serves as cofactor. Co(2+) is required as a cofactor. Requires glutathione as cofactor.

The protein resides in the cytoplasm. It carries out the reaction N(2)-acetyl-L-ornithine + H2O = L-ornithine + acetate. Its pathway is amino-acid biosynthesis; L-arginine biosynthesis; L-ornithine from N(2)-acetyl-L-ornithine (linear): step 1/1. Catalyzes the hydrolysis of the amide bond of N(2)-acetylated L-amino acids. Cleaves the acetyl group from N-acetyl-L-ornithine to form L-ornithine, an intermediate in L-arginine biosynthesis pathway, and a branchpoint in the synthesis of polyamines. In Shigella sonnei (strain Ss046), this protein is Acetylornithine deacetylase.